Reading from the N-terminus, the 273-residue chain is Glutamate racemase (273 aa).

Substrate-binding positions include Asp-9–Ser-10 and Tyr-41–Gly-42. Cys-73 serves as the catalytic Proton donor/acceptor. Asn-74–Thr-75 contributes to the substrate binding site. Residue Cys-183 is the Proton donor/acceptor of the active site. Thr-184–His-185 contacts substrate.

Belongs to the aspartate/glutamate racemases family.

The enzyme catalyses L-glutamate = D-glutamate. Its pathway is cell wall biogenesis; peptidoglycan biosynthesis. Its function is as follows. Provides the (R)-glutamate required for cell wall biosynthesis. This Shewanella sp. (strain ANA-3) protein is Glutamate racemase.